A 339-amino-acid chain; its full sequence is Putative agmatine deiminase (339 aa).

C331 acts as the Amidino-cysteine intermediate in catalysis.

The protein belongs to the agmatine deiminase family.

It carries out the reaction agmatine + H2O = N-carbamoylputrescine + NH4(+). This Streptomyces coelicolor (strain ATCC BAA-471 / A3(2) / M145) protein is Putative agmatine deiminase.